The sequence spans 940 residues: Bifunctional uridylyltransferase/uridylyl-removing enzyme (940 aa).

Positions 1-379 are uridylyltransferase; that stretch reads MPRRLRPTRL…PGARPKRKAL (379 aa). Residues 380-736 are uridylyl-removing; the sequence is DVEGFYEDGG…GQVRPGSNAA (357 aa). One can recognise an HD domain in the interval 496 to 618; it reads VDEHTLRAVG…VENPERLRLL (123 aa). ACT domains follow at residues 737–821 and 848–929; these read EVVI…PRRG and VVEA…AARP.

The protein belongs to the GlnD family. Mg(2+) is required as a cofactor.

The catalysed reaction is [protein-PII]-L-tyrosine + UTP = [protein-PII]-uridylyl-L-tyrosine + diphosphate. It catalyses the reaction [protein-PII]-uridylyl-L-tyrosine + H2O = [protein-PII]-L-tyrosine + UMP + H(+). Uridylyltransferase (UTase) activity is inhibited by glutamine, while glutamine activates uridylyl-removing (UR) activity. Modifies, by uridylylation and deuridylylation, the PII regulatory proteins (GlnB and homologs), in response to the nitrogen status of the cell that GlnD senses through the glutamine level. Under low glutamine levels, catalyzes the conversion of the PII proteins and UTP to PII-UMP and PPi, while under higher glutamine levels, GlnD hydrolyzes PII-UMP to PII and UMP (deuridylylation). Thus, controls uridylylation state and activity of the PII proteins, and plays an important role in the regulation of nitrogen assimilation and metabolism. In Caulobacter vibrioides (strain ATCC 19089 / CIP 103742 / CB 15) (Caulobacter crescentus), this protein is Bifunctional uridylyltransferase/uridylyl-removing enzyme.